A 99-amino-acid chain; its full sequence is UPF0729 protein CG18508 (99 aa).

Residues 60–99 are disordered; sequence PGGKKTENVSDDDAEESENPPLNATAMAAETEVDESKKEI. Over residues 68–77 the composition is skewed to acidic residues; that stretch reads VSDDDAEESE. The residue at position 69 (serine 69) is a Phosphoserine.

Belongs to the UPF0729 family.

The protein is UPF0729 protein CG18508 of Drosophila melanogaster (Fruit fly).